Consider the following 336-residue polypeptide: MPRGQASKRRAREKRRQARGEDQCLGGAQATAAEKEKLPSSSSPACQSPPQSFPNAGIPQESQRASYPSSPASAVSLTSSDEGAKGQKGESPNSFHGPSSSESTGRDLLNTKTGELVQFLLNKYIRKEPITREAMLKVINRKYKQHFPEILRRSTENVEVVFGLYLKEMDPSRQSYVLVGKLDFPNQGSLSDGGGFPLSGLLMVLLSTIFMHGNRATEEEMWECLNALGMYKGRKHFIYGEPQELVTKDLVREGYLEYQQVPSSDPPRYEFLWGPRARAETSKMKVLEFVAKLNDTVASTYKSRYEEALREEEEQARARAVARDSARARASRSFQP.

The span at 1–17 (MPRGQASKRRAREKRRQ) shows a compositional bias: basic residues. Residues 1 to 108 (MPRGQASKRR…SSSESTGRDL (108 aa)) form a disordered region. 2 stretches are compositionally biased toward low complexity: residues 39–54 (PSSSSPACQSPPQSFP) and 62–80 (SQRASYPSSPASAVSLTSS). The segment covering 90–103 (ESPNSFHGPSSSES) has biased composition (polar residues). The MAGE domain occupies 109–336 (LNTKTGELVQ…RARASRSFQP (228 aa)).

The sequence is that of Melanoma-associated antigen B17 (MAGEB17) from Homo sapiens (Human).